The chain runs to 208 residues: Putative dioxygenase RC0543 (208 aa).

This sequence belongs to the intradiol ring-cleavage dioxygenase family.

The sequence is that of Putative dioxygenase RC0543 from Rickettsia conorii (strain ATCC VR-613 / Malish 7).